The following is a 118-amino-acid chain: Large ribosomal subunit protein uL18 (118 aa).

It belongs to the universal ribosomal protein uL18 family. Part of the 50S ribosomal subunit; part of the 5S rRNA/L5/L18/L25 subcomplex. Contacts the 5S and 23S rRNAs.

Functionally, this is one of the proteins that bind and probably mediate the attachment of the 5S RNA into the large ribosomal subunit, where it forms part of the central protuberance. The chain is Large ribosomal subunit protein uL18 from Dechloromonas aromatica (strain RCB).